We begin with the raw amino-acid sequence, 239 residues long: Phosphothreonine lyase OspF (239 aa).

His104 functions as the Proton donor in the catalytic mechanism. Lys134 acts as the Proton acceptor in catalysis.

The protein belongs to the phosphothreonine lyase family.

The protein resides in the secreted. Catalyzes the removal of the phosphate group from the phosphothreonine in the mitogen-activated protein kinases such as MAPK2/ERK2, MAPK3/ERK1, MAPK8 and MAPK14 in an irreversible reaction, thus preventing the downstream phosphorylation of histone H3. This epigenetic modification results in inhibition of the transcription of a specific subset of pro-inflammatory genes, and ultimately to a reduced immune response against the invading pathogen. The diminished immune response enhances the bacterium's ability to disseminate and multiply within the host. The protein is Phosphothreonine lyase OspF (ospF) of Shigella sonnei (strain Ss046).